Here is a 248-residue protein sequence, read N- to C-terminus: Large ribosomal subunit protein uL4 (248 aa).

Disordered regions lie at residues 72 to 103 and 173 to 210; these read RSEN…KSLN and GRSV…RNLS. Positions 92 to 103 are enriched in basic and acidic residues; sequence PKAEKDQTKSLN. Basic residues predominate over residues 177–189; sequence RAGRGKTRGRKYS.

This sequence belongs to the universal ribosomal protein uL4 family. In terms of assembly, part of the 50S ribosomal subunit.

One of the primary rRNA binding proteins, this protein initially binds near the 5'-end of the 23S rRNA. It is important during the early stages of 50S assembly. It makes multiple contacts with different domains of the 23S rRNA in the assembled 50S subunit and ribosome. Its function is as follows. Forms part of the polypeptide exit tunnel. The polypeptide is Large ribosomal subunit protein uL4 (Halorubrum lacusprofundi (strain ATCC 49239 / DSM 5036 / JCM 8891 / ACAM 34)).